Reading from the N-terminus, the 73-residue chain is Defensin-like protein 87 (73 aa).

Residues 1-27 (MTTKKTSSVVLPLLLVFALILMPMVAG) form the signal peptide. Cystine bridges form between C33-C71, C45-C69, and C49-C70.

It belongs to the DEFL family.

The protein resides in the secreted. The protein is Defensin-like protein 87 of Arabidopsis thaliana (Mouse-ear cress).